A 1447-amino-acid polypeptide reads, in one-letter code: Sister chromatid cohesion protein PDS5 homolog B (1447 aa).

One copy of the HEAT repeat lies at 383-419 (LLVNDHLLNFVRERTLDKRWRVRKEAMMGLAQIYKKY). The tract at residues 1117-1447 (KSFFTPGKPK…RRRSAKRERR (331 aa)) is disordered. Residue Lys-1136 is modified to N6-acetyllysine. Residues 1137–1155 (PLSSAGKQSQTKSSRMETV) show a composition bias toward polar residues. A phosphoserine mark is found at Ser-1140, Ser-1162, Ser-1166, Ser-1176, Ser-1182, and Ser-1191. Residues 1156 to 1167 (SNASSSSNPSSP) are compositionally biased toward low complexity. A compositionally biased stretch (basic and acidic residues) spans 1172–1184 (GRLDSSEMDHSEN). Basic and acidic residues-rich tracts occupy residues 1196 to 1214 (KKSDKRDDSDLVRSELEKP) and 1225 to 1243 (QEEKLGMDDLTKLVQEQKP). Residues 1245–1254 (GSQRSRKRGH) show a composition bias toward basic residues. A DNA-binding region (a.T hook 1) is located at residues 1249 to 1261 (SRKRGHTASESDE). The residue at position 1255 (Thr-1255) is a Phosphothreonine. Residues Ser-1257 and Ser-1259 each carry the phosphoserine modification. Positions 1265 to 1274 (PEEKRLKEDI) are enriched in basic and acidic residues. Residue Ser-1283 is modified to Phosphoserine. The segment at residues 1287–1299 (KGKRGRPPKPLGG) is a DNA-binding region (a.T hook 2). Residues 1310-1319 (TSKKGSKKKS) are compositionally biased toward basic residues. A phosphoserine mark is found at Ser-1319 and Ser-1334. Over residues 1342-1353 (KSKQHRVSRRAQ) the composition is skewed to basic residues. The span at 1355–1372 (RAESPESSAIESTQSTPQ) shows a compositional bias: polar residues. Residues Ser-1358 and Ser-1366 each carry the phosphoserine modification. Thr-1367 bears the Phosphothreonine mark. The residue at position 1369 (Ser-1369) is a Phosphoserine. 2 positions are modified to phosphothreonine: Thr-1370 and Thr-1381. Positions 1372 to 1384 (QKGRGRPSKTPSP) form a DNA-binding region, a.T hook 3. Residues 1379 to 1388 (SKTPSPSQPK) show a composition bias toward low complexity. A phosphoserine mark is found at Ser-1383 and Ser-1417. Over residues 1422–1432 (IPQEETEEEEV) the composition is skewed to acidic residues. Over residues 1437–1447 (VRRRSAKRERR) the composition is skewed to basic residues.

This sequence belongs to the PDS5 family. As to quaternary structure, interacts with the cohesin complex. Interacts with RAD21; the interaction is direct. Interacts with WAPL (via FGF motifs) or CDCA5 (via the FGF motif); the interaction is direct, cohesin-dependent and competitive. As to expression, widely expressed.

The protein localises to the nucleus. Its function is as follows. Regulator of sister chromatid cohesion in mitosis which may stabilize cohesin complex association with chromatin. May couple sister chromatid cohesion during mitosis to DNA replication. Cohesion ensures that chromosome partitioning is accurate in both meiotic and mitotic cells and plays an important role in DNA repair. Plays a role in androgen-induced proliferative arrest in prostate cells. The polypeptide is Sister chromatid cohesion protein PDS5 homolog B (PDS5B) (Homo sapiens (Human)).